Consider the following 399-residue polypeptide: MAKEKFSRNKPHVNIGTIGHVDHGKTTLTAAISAVLSRRGLAELKDYDNIDNAPEEKERGITIATSHIEYETDNRHYAHVDCPGHADYVKNMITGAAQMDGAILVVSAADGPMPQTREHILLSRQVGVPYIVVFMNKADMVDDAELLELVEMEIRELLSSYDFPGDDTPIISGSALKALEEAKAGQDGEWSAKIMDLMAAVDSYIPTPTRDTEKDFLMPIEDVFSISGRGTVVTGRIEKGVVKVGDTIEIVGIKDTQTTTVTGVEMFRKEMDQGEAGDNVGVLLRGTKKEEVIRGMVLAKPKSITPHTDFEAEVYILNKDEGGRHTPFFNNYRPQFYVRTTDVTGSIKLADGVEMVMPGENVRITVSLIAPVALEEGTRFAIREGGKTVGSGVVSKIIK.

Residues 10–209 (KPHVNIGTIG…AVDSYIPTPT (200 aa)) form the tr-type G domain. Residues 19 to 26 (GHVDHGKT) form a G1 region. Residue 19-26 (GHVDHGKT) participates in GTP binding. Thr-26 is a Mg(2+) binding site. The segment at 60 to 64 (GITIA) is G2. Positions 81-84 (DCPG) are G3. GTP is bound by residues 81–85 (DCPGH) and 136–139 (NKAD). The interval 136–139 (NKAD) is G4. The segment at 174 to 176 (SAL) is G5.

This sequence belongs to the TRAFAC class translation factor GTPase superfamily. Classic translation factor GTPase family. EF-Tu/EF-1A subfamily. In terms of assembly, monomer.

The protein resides in the cytoplasm. It catalyses the reaction GTP + H2O = GDP + phosphate + H(+). GTP hydrolase that promotes the GTP-dependent binding of aminoacyl-tRNA to the A-site of ribosomes during protein biosynthesis. This Campylobacter jejuni (strain RM1221) protein is Elongation factor Tu.